The sequence spans 188 residues: Acireductone dioxygenase (188 aa).

4 residues coordinate Fe(2+): H97, H99, E103, and H141. H97, H99, E103, and H141 together coordinate Ni(2+).

This sequence belongs to the acireductone dioxygenase (ARD) family. As to quaternary structure, monomer. Fe(2+) serves as cofactor. It depends on Ni(2+) as a cofactor.

The enzyme catalyses 1,2-dihydroxy-5-(methylsulfanyl)pent-1-en-3-one + O2 = 3-(methylsulfanyl)propanoate + CO + formate + 2 H(+). The catalysed reaction is 1,2-dihydroxy-5-(methylsulfanyl)pent-1-en-3-one + O2 = 4-methylsulfanyl-2-oxobutanoate + formate + 2 H(+). Its pathway is amino-acid biosynthesis; L-methionine biosynthesis via salvage pathway; L-methionine from S-methyl-5-thio-alpha-D-ribose 1-phosphate: step 5/6. Catalyzes 2 different reactions between oxygen and the acireductone 1,2-dihydroxy-3-keto-5-methylthiopentene (DHK-MTPene) depending upon the metal bound in the active site. Fe-containing acireductone dioxygenase (Fe-ARD) produces formate and 2-keto-4-methylthiobutyrate (KMTB), the alpha-ketoacid precursor of methionine in the methionine recycle pathway. Ni-containing acireductone dioxygenase (Ni-ARD) produces methylthiopropionate, carbon monoxide and formate, and does not lie on the methionine recycle pathway. The protein is Acireductone dioxygenase of Xanthomonas oryzae pv. oryzae (strain MAFF 311018).